We begin with the raw amino-acid sequence, 186 residues long: dTTP/UTP pyrophosphatase (186 aa).

Asp67 serves as the catalytic Proton acceptor.

This sequence belongs to the Maf family. YhdE subfamily. A divalent metal cation serves as cofactor.

It is found in the cytoplasm. The enzyme catalyses dTTP + H2O = dTMP + diphosphate + H(+). It carries out the reaction UTP + H2O = UMP + diphosphate + H(+). Its function is as follows. Nucleoside triphosphate pyrophosphatase that hydrolyzes dTTP and UTP. May have a dual role in cell division arrest and in preventing the incorporation of modified nucleotides into cellular nucleic acids. The sequence is that of dTTP/UTP pyrophosphatase from Carboxydothermus hydrogenoformans (strain ATCC BAA-161 / DSM 6008 / Z-2901).